Consider the following 368-residue polypeptide: Phospho-N-acetylmuramoyl-pentapeptide-transferase (368 aa).

Transmembrane regions (helical) follow at residues 30–50 (AAAITALLITLLIGPKLIAYL), 72–92 (LPTMGGLLIIFAFELSVFLWA), 99–119 (VWLVMVAVLWMGAVGFLDDYL), 135–155 (LIGQVLLGLLVGLYAWFDPSM), 170–190 (LTINYGIFYVPVVIFIITAIS), 201–221 (GLAAGTSAIAFIGLAGFAYLA), 238–258 (GGEVAIVSMALVMACVGFLWF), 265–286 (IIMGDTGSLALGSAMAVIALLI), and 345–365 (KIVIRFWIMAILFFLASLMTL).

Belongs to the glycosyltransferase 4 family. MraY subfamily. Mg(2+) is required as a cofactor.

The protein localises to the cell inner membrane. It carries out the reaction UDP-N-acetyl-alpha-D-muramoyl-L-alanyl-gamma-D-glutamyl-meso-2,6-diaminopimeloyl-D-alanyl-D-alanine + di-trans,octa-cis-undecaprenyl phosphate = di-trans,octa-cis-undecaprenyl diphospho-N-acetyl-alpha-D-muramoyl-L-alanyl-D-glutamyl-meso-2,6-diaminopimeloyl-D-alanyl-D-alanine + UMP. The protein operates within cell wall biogenesis; peptidoglycan biosynthesis. Functionally, catalyzes the initial step of the lipid cycle reactions in the biosynthesis of the cell wall peptidoglycan: transfers peptidoglycan precursor phospho-MurNAc-pentapeptide from UDP-MurNAc-pentapeptide onto the lipid carrier undecaprenyl phosphate, yielding undecaprenyl-pyrophosphoryl-MurNAc-pentapeptide, known as lipid I. In Chlorobium chlorochromatii (strain CaD3), this protein is Phospho-N-acetylmuramoyl-pentapeptide-transferase.